Reading from the N-terminus, the 192-residue chain is Xanthine phosphoribosyltransferase (192 aa).

2 residues coordinate xanthine: leucine 20 and asparagine 27. 5-phospho-alpha-D-ribose 1-diphosphate is bound at residue 128–132; that stretch reads ANGDA. Position 156 (lysine 156) interacts with xanthine.

Belongs to the purine/pyrimidine phosphoribosyltransferase family. Xpt subfamily. In terms of assembly, homodimer.

Its subcellular location is the cytoplasm. It catalyses the reaction XMP + diphosphate = xanthine + 5-phospho-alpha-D-ribose 1-diphosphate. It participates in purine metabolism; XMP biosynthesis via salvage pathway; XMP from xanthine: step 1/1. Functionally, converts the preformed base xanthine, a product of nucleic acid breakdown, to xanthosine 5'-monophosphate (XMP), so it can be reused for RNA or DNA synthesis. The chain is Xanthine phosphoribosyltransferase from Staphylococcus aureus (strain JH1).